A 178-amino-acid chain; its full sequence is ATP-dependent protease subunit HslV (178 aa).

The active site involves Thr-7. Na(+) contacts are provided by Gly-162, Cys-165, and Thr-168.

It belongs to the peptidase T1B family. HslV subfamily. As to quaternary structure, a double ring-shaped homohexamer of HslV is capped on each side by a ring-shaped HslU homohexamer. The assembly of the HslU/HslV complex is dependent on binding of ATP.

It localises to the cytoplasm. It catalyses the reaction ATP-dependent cleavage of peptide bonds with broad specificity.. Its activity is regulated as follows. Allosterically activated by HslU binding. Protease subunit of a proteasome-like degradation complex believed to be a general protein degrading machinery. This chain is ATP-dependent protease subunit HslV, found in Cupriavidus pinatubonensis (strain JMP 134 / LMG 1197) (Cupriavidus necator (strain JMP 134)).